The sequence spans 353 residues: UPF0283 membrane protein CKO_01392 (353 aa).

3 helical membrane-spanning segments follow: residues 70–90, 99–119, and 213–233; these read MVMG…VQWT, WVAL…VGSV, and ESTL…FIAW.

Belongs to the UPF0283 family.

The protein resides in the cell inner membrane. In Citrobacter koseri (strain ATCC BAA-895 / CDC 4225-83 / SGSC4696), this protein is UPF0283 membrane protein CKO_01392.